Here is a 206-residue protein sequence, read N- to C-terminus: Uridine kinase (206 aa).

9–16 is an ATP binding site; it reads GGSGSGKT.

The protein belongs to the uridine kinase family.

Its subcellular location is the cytoplasm. It carries out the reaction uridine + ATP = UMP + ADP + H(+). The enzyme catalyses cytidine + ATP = CMP + ADP + H(+). It functions in the pathway pyrimidine metabolism; CTP biosynthesis via salvage pathway; CTP from cytidine: step 1/3. The protein operates within pyrimidine metabolism; UMP biosynthesis via salvage pathway; UMP from uridine: step 1/1. This Borrelia garinii subsp. bavariensis (strain ATCC BAA-2496 / DSM 23469 / PBi) (Borreliella bavariensis) protein is Uridine kinase.